Consider the following 487-residue polypeptide: Galactose-1-phosphate uridylyltransferase (487 aa).

Belongs to the galactose-1-phosphate uridylyltransferase type 2 family.

Its subcellular location is the cytoplasm. The enzyme catalyses alpha-D-galactose 1-phosphate + UDP-alpha-D-glucose = alpha-D-glucose 1-phosphate + UDP-alpha-D-galactose. Its pathway is carbohydrate metabolism; galactose metabolism. This chain is Galactose-1-phosphate uridylyltransferase, found in Lactiplantibacillus plantarum (strain ATCC BAA-793 / NCIMB 8826 / WCFS1) (Lactobacillus plantarum).